Consider the following 153-residue polypeptide: 1,4-dihydroxy-2-naphthoyl-CoA hydrolase (153 aa).

Asp21 is an active-site residue.

The protein belongs to the 4-hydroxybenzoyl-CoA thioesterase family. DHNA-CoA hydrolase subfamily.

The enzyme catalyses 1,4-dihydroxy-2-naphthoyl-CoA + H2O = 1,4-dihydroxy-2-naphthoate + CoA + H(+). It participates in cofactor biosynthesis; phylloquinone biosynthesis. It functions in the pathway quinol/quinone metabolism; 1,4-dihydroxy-2-naphthoate biosynthesis; 1,4-dihydroxy-2-naphthoate from chorismate: step 7/7. Functionally, catalyzes the hydrolysis of 1,4-dihydroxy-2-naphthoyl-CoA (DHNA-CoA) to 1,4-dihydroxy-2-naphthoate (DHNA), a reaction involved in phylloquinone (vitamin K1) biosynthesis. The protein is 1,4-dihydroxy-2-naphthoyl-CoA hydrolase of Synechococcus sp. (strain WH7803).